Reading from the N-terminus, the 420-residue chain is UDP-N-acetylglucosamine 1-carboxyvinyltransferase 2 (420 aa).

Residue 22–23 (KN) participates in phosphoenolpyruvate binding. Arginine 92 contributes to the UDP-N-acetyl-alpha-D-glucosamine binding site. Cysteine 116 serves as the catalytic Proton donor. A 2-(S-cysteinyl)pyruvic acid O-phosphothioketal modification is found at cysteine 116. UDP-N-acetyl-alpha-D-glucosamine-binding positions include 121–125 (RPIDL), aspartate 307, and isoleucine 329.

This sequence belongs to the EPSP synthase family. MurA subfamily.

It localises to the cytoplasm. It catalyses the reaction phosphoenolpyruvate + UDP-N-acetyl-alpha-D-glucosamine = UDP-N-acetyl-3-O-(1-carboxyvinyl)-alpha-D-glucosamine + phosphate. Its pathway is cell wall biogenesis; peptidoglycan biosynthesis. Cell wall formation. Adds enolpyruvyl to UDP-N-acetylglucosamine. This chain is UDP-N-acetylglucosamine 1-carboxyvinyltransferase 2, found in Streptococcus thermophilus (strain ATCC BAA-250 / LMG 18311).